The sequence spans 394 residues: MNKKTLYDYDFAGKTVFCRVDFNVPMKDGKITDETRIQAALPTIKYLSEQGARVLLASHLGRPKGEVVESLRLAPVATRLSELLGKEVQAVQEAHGPVAKQAVEGLEDGGVLLLENVRFYPGEEKNDPELAKAFASLADIFVNDAFGAAHRAHASTEGIAHYLPSAAGFLMEKELDVLGKALSNPERPFTAVIGGAKVKDKIGVIDNLLDKVDNLIIGGGLAYTFVKAQGYEVGKSLLEEDKLDLAKQFMEKAEQKGVKFYMPEDVIVADDFSDDANKKEVAISGIPADWEALDIGPKTRKTYEAVLKASKLVIWNGPMGVFELESFAGGTKAVANALAEASDTYSVIGGGDSAAAVEQFGLADKMSHISTGGGASLEFMEGKELPGVVALSEK.

Substrate contacts are provided by residues 21 to 23 (DFN), R36, 59 to 62 (HLGR), R118, and R151. S183 carries the post-translational modification Phosphoserine. Residue K201 coordinates ATP. A Phosphothreonine modification is found at T299. Residues E323 and 350–353 (GGDS) contribute to the ATP site.

It belongs to the phosphoglycerate kinase family. As to quaternary structure, monomer.

It localises to the cytoplasm. It carries out the reaction (2R)-3-phosphoglycerate + ATP = (2R)-3-phospho-glyceroyl phosphate + ADP. Its pathway is carbohydrate degradation; glycolysis; pyruvate from D-glyceraldehyde 3-phosphate: step 2/5. This is Phosphoglycerate kinase from Shouchella clausii (strain KSM-K16) (Alkalihalobacillus clausii).